The sequence spans 225 residues: Cytidylate kinase (225 aa).

12 to 20 (GPSGAGKGT) is a binding site for ATP.

This sequence belongs to the cytidylate kinase family. Type 1 subfamily.

The protein localises to the cytoplasm. The enzyme catalyses CMP + ATP = CDP + ADP. The catalysed reaction is dCMP + ATP = dCDP + ADP. In Pectobacterium atrosepticum (strain SCRI 1043 / ATCC BAA-672) (Erwinia carotovora subsp. atroseptica), this protein is Cytidylate kinase.